The chain runs to 471 residues: 3-isopropylmalate dehydratase large subunit (471 aa).

[4Fe-4S] cluster contacts are provided by Cys-347, Cys-407, and Cys-410.

The protein belongs to the aconitase/IPM isomerase family. LeuC type 1 subfamily. Heterodimer of LeuC and LeuD. [4Fe-4S] cluster serves as cofactor.

It carries out the reaction (2R,3S)-3-isopropylmalate = (2S)-2-isopropylmalate. Its pathway is amino-acid biosynthesis; L-leucine biosynthesis; L-leucine from 3-methyl-2-oxobutanoate: step 2/4. Functionally, catalyzes the isomerization between 2-isopropylmalate and 3-isopropylmalate, via the formation of 2-isopropylmaleate. This is 3-isopropylmalate dehydratase large subunit from Buchnera aphidicola subsp. Acyrthosiphon pisum (strain APS) (Acyrthosiphon pisum symbiotic bacterium).